The primary structure comprises 458 residues: Cysteine--tRNA ligase (458 aa).

Residue cysteine 33 participates in Zn(2+) binding. Positions 35–45 (PTVYDFAHIGN) match the 'HIGH' region motif. 3 residues coordinate Zn(2+): cysteine 221, histidine 246, and glutamate 250. The 'KMSKS' region motif lies at 279-283 (KMSKS). Residue lysine 282 coordinates ATP.

This sequence belongs to the class-I aminoacyl-tRNA synthetase family. As to quaternary structure, monomer. It depends on Zn(2+) as a cofactor.

It is found in the cytoplasm. It catalyses the reaction tRNA(Cys) + L-cysteine + ATP = L-cysteinyl-tRNA(Cys) + AMP + diphosphate. This chain is Cysteine--tRNA ligase, found in Rhizobium etli (strain ATCC 51251 / DSM 11541 / JCM 21823 / NBRC 15573 / CFN 42).